A 354-amino-acid chain; its full sequence is Zinc finger protein-like 1 homolog (354 aa).

Residues 1–41 (MGICKCKKRSEDFCFNHKKFICDSCVVADHSICYIKSYVSW) form a B box-type; degenerate zinc finger. The segment at 52-103 (CGVCKGKFDVDDNDDSVRLLCYHLYHPECIDVYVAALPQNSSVESYPCPKCP) adopts an RING-type; atypical zinc-finger fold. Disordered stretches follow at residues 139-167 (KQNS…NGTH) and 187-225 (GIHH…PYGL). A compositionally biased stretch (low complexity) spans 196-205 (NNSNNNNIIN). A helical membrane pass occupies residues 287–307 (YLIMITVAIIVFLILISKMGS). A disordered region spans residues 326-354 (ININNDNNGGNGAINEETLNDQKIPNNGQ).

This sequence belongs to the ZFPL1 family.

The protein resides in the membrane. This Dictyostelium discoideum (Social amoeba) protein is Zinc finger protein-like 1 homolog (zfpl1).